A 206-amino-acid chain; its full sequence is Superoxide dismutase [Mn] (206 aa).

H30, H78, D166, and H170 together coordinate Mn(2+).

It belongs to the iron/manganese superoxide dismutase family. Homodimer. Requires Mn(2+) as cofactor.

The enzyme catalyses 2 superoxide + 2 H(+) = H2O2 + O2. Destroys superoxide anion radicals which are normally produced within the cells and which are toxic to biological systems. The sequence is that of Superoxide dismutase [Mn] (sodA) from Chlamydia trachomatis serovar D (strain ATCC VR-885 / DSM 19411 / UW-3/Cx).